The primary structure comprises 469 residues: MSAPRTLYDKIWDDHLVDEQADGTCLLYIDRHLVHEVTSPQAFEGLRMTGRKVRAPEKTLAVVDHNVPTSPDRHLGIKNEESRIQVEALATNAAEFGVEYYSASDKRQGIVHIVGPEQGFTLPGMTIVCGDSHTSTHGAFGALAHGIGTSEVEHVLATQTLIQKKAKNMLVRVDGQLPPHVTAKDIILAIIGEIGTAGGTGHVIEFAGEAIRALSMEGRMTVCNMTIEGGARAGLIAPDEKTFEYIKGKPRAPKGEALEQAIAYWKTLQTDEGAHYDRVVVLDAASLPPIVSWGSSPEDVISVQGIVPNPDDIPDETKRTSKWRALDYMGLKPGTKMTDITLDRVFIGSCTNGRIEDLREVAKVVEGKTVAPTVDAMIVPGSGLVKEQAEAEGLDKIFKAAGFDWREPGCSMCLAMNDDRLKPGERCASTSNRNFEGRQGFKGRTHLVSPAMAAAAAIAGHFVDIREWN.

Positions 350, 410, and 413 each coordinate [4Fe-4S] cluster.

The protein belongs to the aconitase/IPM isomerase family. LeuC type 1 subfamily. Heterodimer of LeuC and LeuD. [4Fe-4S] cluster serves as cofactor.

It catalyses the reaction (2R,3S)-3-isopropylmalate = (2S)-2-isopropylmalate. Its pathway is amino-acid biosynthesis; L-leucine biosynthesis; L-leucine from 3-methyl-2-oxobutanoate: step 2/4. In terms of biological role, catalyzes the isomerization between 2-isopropylmalate and 3-isopropylmalate, via the formation of 2-isopropylmaleate. The sequence is that of 3-isopropylmalate dehydratase large subunit from Rhizobium johnstonii (strain DSM 114642 / LMG 32736 / 3841) (Rhizobium leguminosarum bv. viciae).